Consider the following 243-residue polypeptide: Transmembrane protein 174 (243 aa).

2 consecutive transmembrane segments (helical) span residues 40–60 and 73–93; these read LLFS…MGWI and LLGP…VCKF. Residues 205-229 form a disordered region; sequence AGHDRPSSDADQLEGTQMGEEERVC.

In terms of assembly, interacts with SLC34A1; regulates SLC34A1 internalization by PTH and FGF23.

The protein localises to the endoplasmic reticulum membrane. Its subcellular location is the apical cell membrane. Its function is as follows. Regulator of plasma phosphate homeostasis. Decreases serum inorganic phosphate (Pi) uptake by regulating the sodium-phosphate cotransporter SLC34A1 trafficking by PTH and FGF23 in the kidney. This chain is Transmembrane protein 174 (Tmem174), found in Rattus norvegicus (Rat).